Here is a 290-residue protein sequence, read N- to C-terminus: Inner membrane protein YebZ (290 aa).

Topologically, residues 1–10 are periplasmic; sequence MLAFTWIALR. Residues 11-31 form a helical membrane-spanning segment; the sequence is FIHFTSLMLVFGFAMYGAWLA. Over 32–49 the chain is Cytoplasmic; sequence PLTIRRLLAKRFLRLQQH. Residues 50-70 traverse the membrane as a helical segment; that stretch reads AAVWSLISATAMLAVQGGLMG. The Periplasmic portion of the chain corresponds to 71-89; that stretch reads TGWTDVFSPNIWQAVLQTQ. The helical transmembrane segment at 90–110 threads the bilayer; it reads FGGIWLWQIVLALVTLIVALM. Over 111–117 the chain is Cytoplasmic; it reads QPRNMPR. A helical transmembrane segment spans residues 118-138; the sequence is LLFMLTTAQFILLAGVGHATL. The Periplasmic segment spans residues 139-151; that stretch reads NEGVTAKIHQTNH. Residues 152 to 172 form a helical membrane-spanning segment; that stretch reads AIHLICAAAWFGGLLPVLWCM. Residues 173-195 are Cytoplasmic-facing; that stretch reads QLIKGRWRHQAIQALMRFSWCGH. A helical membrane pass occupies residues 196-216; that stretch reads FAVIGVLASGVLNALLITGFP. Over 217–222 the chain is Periplasmic; it reads PTLTTY. Residues 223–243 traverse the membrane as a helical segment; sequence WGQLLLLKAILVMIMVVIALA. Residues 244-260 are Cytoplasmic-facing; the sequence is NRYVLVPRMRQDEDRAA. A helical membrane pass occupies residues 261–281; it reads PWFVWMTKLEWAIGAVVLVII. Over 282–290 the chain is Periplasmic; sequence SLLATLEPF.

Belongs to the CopD family.

It localises to the cell inner membrane. The polypeptide is Inner membrane protein YebZ (yebZ) (Escherichia coli (strain K12)).